The sequence spans 78 residues: Small ribosomal subunit protein uS15c (78 aa).

The protein belongs to the universal ribosomal protein uS15 family. As to quaternary structure, part of the 30S ribosomal subunit.

The protein localises to the plastid. Its subcellular location is the chloroplast. This Saccharum officinarum (Sugarcane) protein is Small ribosomal subunit protein uS15c (rps15-A).